Reading from the N-terminus, the 100-residue chain is Large ribosomal subunit protein uL23 (100 aa).

The protein belongs to the universal ribosomal protein uL23 family. As to quaternary structure, part of the 50S ribosomal subunit. Contacts protein L29, and trigger factor when it is bound to the ribosome.

One of the early assembly proteins it binds 23S rRNA. One of the proteins that surrounds the polypeptide exit tunnel on the outside of the ribosome. Forms the main docking site for trigger factor binding to the ribosome. This is Large ribosomal subunit protein uL23 from Photorhabdus laumondii subsp. laumondii (strain DSM 15139 / CIP 105565 / TT01) (Photorhabdus luminescens subsp. laumondii).